The following is a 115-amino-acid chain: Thiosulfate:glutathione sulfurtransferase (115 aa).

In terms of domain architecture, Rhodanese spans 17–115; sequence ASGRARLFDV…AYREWLEKES (99 aa). The Cysteine persulfide intermediate role is filled by Cys-79.

As to expression, highly expressed in kidney, liver and skeletal muscle. Lower levels of expression in heart, colon, thymus, spleen, placenta and lung. Weakly expressed in brain, small intestine and peripheral blood leukocytes. Expressed at high levels in the breast carcinoma cell lines MCF-7 and MDA-MB-468 and at a lower level in the breast carcinoma cell line MDA-MB-231, the colon carcinoma call line LoVo and the lung carcinoma cell line A-549. No expression in the cell lines EFO-27 and HeLa, or the normal breast tissue cell lines MCF-10A and H184A1. Detected in invasive ductal carcinoma, but not in the adjacent tissues.

The protein localises to the cytoplasm. The protein resides in the perinuclear region. It catalyses the reaction thiosulfate + glutathione = S-sulfanylglutathione + sulfite + H(+). It carries out the reaction thiosulfate + 2 glutathione = glutathione disulfide + hydrogen sulfide + sulfite + 2 H(+). Its activity is regulated as follows. GSS(-) is a potent inhibitor of TSTD1, since the presence of the sulfur dioxygenase (SDO) strongly increases the TSTD1 catalytic activity. Its function is as follows. Thiosulfate:glutathione sulfurtransferase (TST) required to produce S-sulfanylglutathione (GSS(-)), a central intermediate in hydrogen sulfide metabolism. Provides the link between the first step in mammalian H(2)S metabolism performed by the sulfide:quinone oxidoreductase (SQOR) which catalyzes the conversion of H(2)S to thiosulfate, and the sulfur dioxygenase (SDO) which uses GSS(-) as substrate. The thermodynamic coupling of the irreversible SDO and reversible TST reactions provides a model for the physiologically relevant reaction with thiosulfate as the sulfane donor. GSS(-) spontaneously reacts with glutathione to form glutathione disulfide. The sequence is that of Thiosulfate:glutathione sulfurtransferase (TSTD1) from Homo sapiens (Human).